Here is a 196-residue protein sequence, read N- to C-terminus: GTP cyclohydrolase-2 (196 aa).

R49–E53 contributes to the GTP binding site. Positions 54, 65, and 67 each coordinate Zn(2+). Residues Q70, E92–R94, and T114 each bind GTP. Catalysis depends on D126, which acts as the Proton acceptor. The active-site Nucleophile is R128. GTP contacts are provided by T149 and K154.

The protein belongs to the GTP cyclohydrolase II family. In terms of assembly, homodimer. Zn(2+) is required as a cofactor.

The enzyme catalyses GTP + 4 H2O = 2,5-diamino-6-hydroxy-4-(5-phosphoribosylamino)-pyrimidine + formate + 2 phosphate + 3 H(+). It functions in the pathway cofactor biosynthesis; riboflavin biosynthesis; 5-amino-6-(D-ribitylamino)uracil from GTP: step 1/4. Catalyzes the conversion of GTP to 2,5-diamino-6-ribosylamino-4(3H)-pyrimidinone 5'-phosphate (DARP), formate and pyrophosphate. The protein is GTP cyclohydrolase-2 of Hamiltonella defensa subsp. Acyrthosiphon pisum (strain 5AT).